Here is a 279-residue protein sequence, read N- to C-terminus: MDDLREFAQLFPAWWFGALGVLGLIVGSFLNVVIYRLPIMLERRWRQDIELETGVADPDTRYNLWWPPSSCPHCQQAIAVKDNIPLFSWLWLRGRSRCCHQSVSVQYPLVEVITMLAFLAAGLLWLPGMALWGALILLSFLLVLTVIDIKTLLLPDELTLSLLWMGLLFNLSGTFVSLNDAVVGAMAGYLSLWLLYWAFKYATGKEALGYGDFKLLAALGAWLGWQALPNLVLVAALSGLVVTLIWRGLRKEDTAKPLAFGPWLAIGGVFGMIMNGFNL.

Residues 1 to 16 (MDDLREFAQLFPAWWF) lie on the Periplasmic side of the membrane. A helical transmembrane segment spans residues 17–35 (GALGVLGLIVGSFLNVVIY). The Cytoplasmic segment spans residues 36 to 104 (RLPIMLERRW…RSRCCHQSVS (69 aa)). A helical transmembrane segment spans residues 105–123 (VQYPLVEVITMLAFLAAGL). At 124–130 (LWLPGMA) the chain is on the periplasmic side. A helical membrane pass occupies residues 131–149 (LWGALILLSFLLVLTVIDI). Topologically, residues 150–163 (KTLLLPDELTLSLL) are cytoplasmic. The chain crosses the membrane as a helical span at residues 164–182 (WMGLLFNLSGTFVSLNDAV). At 183–185 (VGA) the chain is on the periplasmic side. The chain crosses the membrane as a helical span at residues 186 to 204 (MAGYLSLWLLYWAFKYATG). Over 205–214 (KEALGYGDFK) the chain is Cytoplasmic. The helical transmembrane segment at 215 to 233 (LLAALGAWLGWQALPNLVL) threads the bilayer. Topologically, residues 234 to 236 (VAA) are periplasmic. Residues 237 to 254 (LSGLVVTLIWRGLRKEDT) traverse the membrane as a helical segment. Residues 255 to 257 (AKP) lie on the Cytoplasmic side of the membrane. The helical transmembrane segment at 258 to 276 (LAFGPWLAIGGVFGMIMNG) threads the bilayer. Over 277–279 (FNL) the chain is Periplasmic.

The protein belongs to the peptidase A24 family.

It is found in the cell inner membrane. The catalysed reaction is Typically cleaves a -Gly-|-Phe- bond to release an N-terminal, basic peptide of 5-8 residues from type IV prepilin, and then N-methylates the new N-terminal amino group, the methyl donor being S-adenosyl-L-methionine.. In terms of biological role, plays a role in type II pseudopili formation by proteolytically removing the leader sequence from substrate proteins and subsequently monomethylating the alpha-amino group of the newly exposed N-terminal phenylalanine. Substrates include proteins required for biogenesis of the type II general secretory apparatus. The sequence is that of Prepilin leader peptidase/N-methyltransferase (outO) from Pectobacterium carotovorum subsp. carotovorum (Erwinia carotovora subsp. carotovora).